We begin with the raw amino-acid sequence, 212 residues long: Maleylpyruvate isomerase (212 aa).

Residues Met1–Ala80 form the GST N-terminal domain. Residues Ser9 to Thr11, His38, Val52, Gln64 to Ser65, Asp102 to His104, Asn108 to Arg110, and Arg176 each bind glutathione. The 128-residue stretch at Asp85 to Ala212 folds into the GST C-terminal domain.

It belongs to the GST superfamily. Zeta family. Homodimer. It depends on glutathione as a cofactor.

It catalyses the reaction 3-maleylpyruvate = 3-fumarylpyruvate. The protein operates within aromatic compound metabolism; naphthalene degradation. In terms of biological role, catalyzes the GSH-dependent isomerization of maleylpyruvate to fumarylpyruvate which is subsequently processed by NagK to form pyruvate and fumarate. The chain is Maleylpyruvate isomerase from Ralstonia sp.